We begin with the raw amino-acid sequence, 808 residues long: Sucrose synthase 2 (808 aa).

S10 is modified (phosphoserine; by CPK). The tract at residues 272-749 (MMFNVVILSP…GLQRIYEKYT (478 aa)) is GT-B glycosyltransferase.

Belongs to the glycosyltransferase 1 family. Plant sucrose synthase subfamily. As to quaternary structure, homotetramer or heterotetramer with SUS1. Post-translationally, phosphorylated at Ser-10 by CPK23 in developing seeds. In terms of tissue distribution, predominantly expressed in the leaf tissues. Expressed in seeds, and at lower levels in roots. Expressed in leaf mesophyll and phloem (at protein level).

It carries out the reaction an NDP-alpha-D-glucose + D-fructose = a ribonucleoside 5'-diphosphate + sucrose + H(+). With respect to regulation, activated by phosphorylation at Ser-10 by CPK23. In terms of biological role, sucrose-cleaving enzyme that provides UDP-glucose and fructose for various metabolic pathways. Functions in developing seeds by supplying substrates for the biosynthesis of storage products. This chain is Sucrose synthase 2 (SUS2), found in Oryza sativa subsp. japonica (Rice).